Here is a 796-residue protein sequence, read N- to C-terminus: MVCCLWVLLALLLHLDHVACEDDAYSFTSKELKAYKQEVKELFYFGFDNYLEHGYPYDEVKPISCVPKKRNFEDPTDQGTNDILGNFTITLIDSLTTIAILEDRPQFLKAVRLVERTFPDGNFDIDSTIQVFEITIRVIGSLLSSHLYATDPTKAVYLGDDYDGSLLRLAQNMADRLLPAYLTSTGLPMPRRNIKRKWDVSEFPEFLETENNVAAMASPMFEFTILSYLTGDPKYEKVTRYAFDKTWSLRTGLDLLPMSFHPEKLTPYTPMTGIGASIDSLFEYALKGAILFDDSELMEVWNVAYEALKTNCKNDWFFANVMADTGHLFVPWIDSLSAFFSGLQVLAGDLDDAIANHLMFLKMWNTFGGIPERWNFSPPEFPPLSPLERSGAVALDNILPLEWYPLRPEFFESTYFLYRATKDPFYLNIGVHLLKDLKQRFKSNCGFAGFQNVITGELQDRMETFVLSETLKYLYLLFDEENELHNSASDVIFSTEAHPMWLPQEVRSNYKRNAKFNNSVYSSHLEICQKKDREQAGENTLSQRIVGFAKSIFHKGPPDEEATDPIIDYTIDTELPGTCSIKPHHVIGDEFWYSPMLSNFDRLFEIDSRFAATLIKPSHMHNYNAIELEPGFYNRWSNPQFSTCLIPPTTEIFELLFDLPGYHQLNPLMLENKTITFETFGGRSRLKIEKLQIYQIDYYGDLITASTFQDVSRKDIFSNACDAVASLYSPTYLYRVVAINGRILPRHGSVQIKKHSPVLTSNGTREEDEFKMDGIGINDHSQLMLECTPIINLFIV.

An N-terminal signal peptide occupies residues 1-20 (MVCCLWVLLALLLHLDHVAC). An N-linked (GlcNAc...) asparagine glycan is attached at Asn-86. The active-site Proton donor is the Glu-372. Residue Thr-495 participates in Ca(2+) binding. N-linked (GlcNAc...) asparagine glycans are attached at residues Asn-517, Asn-672, and Asn-762.

The protein belongs to the glycosyl hydrolase 47 family. Interacts with PDI1. Requires Ca(2+) as cofactor.

It localises to the endoplasmic reticulum lumen. It carries out the reaction Hydrolysis of terminal, non-reducing alpha-D-mannose residues in alpha-D-mannosides.. It participates in protein modification; protein glycosylation. Its function is as follows. Alpha-1,2-specific exomannosidase involved in endoplasmic reticulum-associated degradation (ERAD). Delivers misfolded glycoproteins to proteasomes. Forms a complex with PDI1 to process unfolded protein-bound Man8GlcNAc2 oligosaccharides to Man7GlcNAc2, promoting degradation in unfolded protein response. The protein is ER degradation-enhancing alpha-mannosidase-like protein 1 (MNL1) of Saccharomyces cerevisiae (strain ATCC 204508 / S288c) (Baker's yeast).